The following is a 173-amino-acid chain: Putative metal-dependent hydrolase BCE33L2441 (173 aa).

Zn(2+)-binding residues include histidine 65, histidine 156, and histidine 160.

It belongs to the metal hydrolase YfiT family. Homodimer. It depends on Zn(2+) as a cofactor.

The protein localises to the cytoplasm. Its function is as follows. Possible metal-dependent hydrolase. The protein is Putative metal-dependent hydrolase BCE33L2441 of Bacillus cereus (strain ZK / E33L).